The sequence spans 146 residues: uncharacterized protein (146 aa).

This is an uncharacterized protein from Thermoproteus tenax virus 1 (strain KRA1) (TTV1).